The sequence spans 766 residues: Dipeptidyl peptidase 4 (766 aa).

Residues 1-6 lie on the Cytoplasmic side of the membrane; it reads MKTPWK. A helical; Signal-anchor for type II membrane protein transmembrane segment spans residues 7-27; that stretch reads VLLGLLGIAALVTVITVPVVL. At 28-766 the chain is on the extracellular side; it reads LNKGTDDAAA…HFLKQCFSLP (739 aa). N-linked (GlcNAc...) asparagine glycosylation is found at N85, N92, N150, N179, N219, N229, N279, and N321. 3 disulfides stabilise this stretch: C385/C394, C444/C447, and C454/C472. S630 acts as the Charge relay system in catalysis. A disulfide bond links C649 and C762. An N-linked (GlcNAc...) asparagine glycan is attached at N685. Catalysis depends on charge relay system residues D708 and H740.

Belongs to the peptidase S9B family. DPPIV subfamily. In terms of assembly, monomer. Homodimer. Heterodimer with Seprase (FAP). Requires homodimerization for optimal dipeptidyl peptidase activity and T-cell costimulation. Found in a membrane raft complex, at least composed of BCL10, CARD11, DPP4 and IKBKB. Associates with collagen. Interacts with PTPRC; the interaction is enhanced in an interleukin-12-dependent manner in activated lymphocytes. Interacts (via extracellular domain) with ADA; does not inhibit its dipeptidyl peptidase activity. Interacts with CAV1 (via the N-terminus); the interaction is direct. Interacts (via cytoplasmic tail) with CARD11 (via PDZ domain); its homodimerization is necessary for interaction with CARD11. Interacts with IGF2R; the interaction is direct. Interacts with GPC3. The soluble form (Dipeptidyl peptidase 4 soluble form also named SDPP) derives from the membrane form (Dipeptidyl peptidase 4 membrane form also named MDPP) by proteolytic processing. In terms of processing, N- and O-Glycosylated. Post-translationally, phosphorylated. Mannose 6-phosphate residues in the carbohydrate moiety are necessary for interaction with IGF2R in activated T-cells. Mannose 6-phosphorylation is induced during T-cell activation.

It localises to the secreted. The protein localises to the cell membrane. It is found in the apical cell membrane. The protein resides in the cell projection. Its subcellular location is the invadopodium membrane. It localises to the lamellipodium membrane. The protein localises to the cell junction. It is found in the membrane raft. The enzyme catalyses Release of an N-terminal dipeptide, Xaa-Yaa-|-Zaa-, from a polypeptide, preferentially when Yaa is Pro, provided Zaa is neither Pro nor hydroxyproline.. With respect to regulation, inhibited by GPC3 and diprotin A. Its function is as follows. Cell surface glycoprotein receptor involved in the costimulatory signal essential for T-cell receptor (TCR)-mediated T-cell activation. Acts as a positive regulator of T-cell coactivation, by binding at least ADA, CAV1, IGF2R, and PTPRC. Its binding to CAV1 and CARD11 induces T-cell proliferation and NF-kappa-B activation in a T-cell receptor/CD3-dependent manner. Its interaction with ADA also regulates lymphocyte-epithelial cell adhesion. In association with FAP is involved in the pericellular proteolysis of the extracellular matrix (ECM), the migration and invasion of endothelial cells into the ECM. May be involved in the promotion of lymphatic endothelial cells adhesion, migration and tube formation. When overexpressed, enhanced cell proliferation, a process inhibited by GPC3. Also acts as a serine exopeptidase with a dipeptidyl peptidase activity that regulates various physiological processes by cleaving peptides in the circulation, including many chemokines, mitogenic growth factors, neuropeptides and peptide hormones such as brain natriuretic peptide 32. Removes N-terminal dipeptides sequentially from polypeptides having unsubstituted N-termini provided that the penultimate residue is proline. The sequence is that of Dipeptidyl peptidase 4 (DPP4) from Sus scrofa (Pig).